The sequence spans 394 residues: Major outer membrane porin, serovar B (394 aa).

The first 22 residues, 1-22 (MKKLLKSVLVFAALSSASSLQA), serve as a signal peptide directing secretion.

It belongs to the chlamydial porin (CP) (TC 1.B.2) family. Part of a disulfide cross-linked outer membrane complex (COMC) composed of the major outer membrane porin (MOMP), the small cysteine-rich protein (OmcA) and the large cysteine-rich periplasmic protein (OmcB).

The protein localises to the cell outer membrane. In terms of biological role, in elementary bodies (EBs, the infectious stage, which is able to survive outside the host cell) provides the structural integrity of the outer envelope through disulfide cross-links with the small cysteine-rich protein and the large cysteine-rich periplasmic protein. It has been described in publications as the Sarkosyl-insoluble COMC (Chlamydia outer membrane complex), and serves as the functional equivalent of peptidoglycan. Permits diffusion of specific solutes through the outer membrane. In Chlamydia trachomatis, this protein is Major outer membrane porin, serovar B (ompA).